A 73-amino-acid polypeptide reads, in one-letter code: Small ribosomal subunit protein bS18 (73 aa).

Belongs to the bacterial ribosomal protein bS18 family. In terms of assembly, part of the 30S ribosomal subunit. Forms a tight heterodimer with protein bS6.

Its function is as follows. Binds as a heterodimer with protein bS6 to the central domain of the 16S rRNA, where it helps stabilize the platform of the 30S subunit. The protein is Small ribosomal subunit protein bS18 of Prochlorococcus marinus (strain NATL2A).